Here is a 283-residue protein sequence, read N- to C-terminus: Pantothenate synthetase (283 aa).

Position 30 to 37 (30 to 37 (MGYLHDGH)) interacts with ATP. The active-site Proton donor is the H37. Q61 contributes to the (R)-pantoate binding site. Residue Q61 participates in beta-alanine binding. Residue 148 to 151 (GQKD) participates in ATP binding. A (R)-pantoate-binding site is contributed by Q154. Position 185-188 (185-188 (MSSR)) interacts with ATP.

This sequence belongs to the pantothenate synthetase family. Homodimer.

It localises to the cytoplasm. It carries out the reaction (R)-pantoate + beta-alanine + ATP = (R)-pantothenate + AMP + diphosphate + H(+). It functions in the pathway cofactor biosynthesis; (R)-pantothenate biosynthesis; (R)-pantothenate from (R)-pantoate and beta-alanine: step 1/1. In terms of biological role, catalyzes the condensation of pantoate with beta-alanine in an ATP-dependent reaction via a pantoyl-adenylate intermediate. This is Pantothenate synthetase from Carboxydothermus hydrogenoformans (strain ATCC BAA-161 / DSM 6008 / Z-2901).